A 155-amino-acid chain; its full sequence is SsrA-binding protein (155 aa).

It belongs to the SmpB family.

It is found in the cytoplasm. In terms of biological role, required for rescue of stalled ribosomes mediated by trans-translation. Binds to transfer-messenger RNA (tmRNA), required for stable association of tmRNA with ribosomes. tmRNA and SmpB together mimic tRNA shape, replacing the anticodon stem-loop with SmpB. tmRNA is encoded by the ssrA gene; the 2 termini fold to resemble tRNA(Ala) and it encodes a 'tag peptide', a short internal open reading frame. During trans-translation Ala-aminoacylated tmRNA acts like a tRNA, entering the A-site of stalled ribosomes, displacing the stalled mRNA. The ribosome then switches to translate the ORF on the tmRNA; the nascent peptide is terminated with the 'tag peptide' encoded by the tmRNA and targeted for degradation. The ribosome is freed to recommence translation, which seems to be the essential function of trans-translation. The sequence is that of SsrA-binding protein from Bacillus cytotoxicus (strain DSM 22905 / CIP 110041 / 391-98 / NVH 391-98).